A 272-amino-acid polypeptide reads, in one-letter code: Glutamate racemase (272 aa).

Residues 16–17 and 48–49 each bind substrate; these read DS and YG. The active-site Proton donor/acceptor is the Cys-79. 80–81 provides a ligand contact to substrate; the sequence is NT. The Proton donor/acceptor role is filled by Cys-191. 192-193 lines the substrate pocket; it reads TH.

It belongs to the aspartate/glutamate racemases family.

It carries out the reaction L-glutamate = D-glutamate. The protein operates within cell wall biogenesis; peptidoglycan biosynthesis. Functionally, provides the (R)-glutamate required for cell wall biosynthesis. In Chlorobaculum parvum (strain DSM 263 / NCIMB 8327) (Chlorobium vibrioforme subsp. thiosulfatophilum), this protein is Glutamate racemase.